The sequence spans 311 residues: MHPQVASLFDNVYEDLAAATLEFIGTAFFLLFGLGGIQASTAEDTASGQPPASGIEHVLYISTCMGLSLVVSAWLFFRVTGGLFNPNISFALLLVGGLKPLRFVLFCIAQLTGAIAGAAIVRGLTSAPLSVNNVLQQGTSAAQGVFIEMFITAALVLSVLMLAAEKHEATPFAPVGIGLTLFACHLFAVYYTGAAMNSARAFGPAVISGFPEPQHWVYWVGPFLGSLLGAGFYATLKHYKYWHLNPDQATSDYRKSPSDPVALLKSTAETFINVGDEETRNGCASNEEGVRATGDEKSSNATSSRTNFSPV.

Residues 1–16 are Cytoplasmic-facing; that stretch reads MHPQVASLFDNVYEDL. Residues 17 to 37 form a helical membrane-spanning segment; it reads AAATLEFIGTAFFLLFGLGGI. The Extracellular portion of the chain corresponds to 38–56; it reads QASTAEDTASGQPPASGIE. The chain crosses the membrane as a helical span at residues 57-77; the sequence is HVLYISTCMGLSLVVSAWLFF. R78 is a topological domain (cytoplasmic). Residues 79–99 traverse the membrane as a helical segment; sequence VTGGLFNPNISFALLLVGGLK. The short motif at 85-87 is the NPA 1 element; it reads NPN. Position 100 (P100) is a topological domain, extracellular. The helical transmembrane segment at 101-121 threads the bilayer; that stretch reads LRFVLFCIAQLTGAIAGAAIV. Over 122–143 the chain is Cytoplasmic; it reads RGLTSAPLSVNNVLQQGTSAAQ. Residues 144 to 164 form a helical membrane-spanning segment; sequence GVFIEMFITAALVLSVLMLAA. At 165-168 the chain is on the extracellular side; the sequence is EKHE. The helical transmembrane segment at 169–189 threads the bilayer; the sequence is ATPFAPVGIGLTLFACHLFAV. Topologically, residues 190–215 are cytoplasmic; that stretch reads YYTGAAMNSARAFGPAVISGFPEPQH. The NPA 2 motif lies at 197–199; sequence NSA. A helical membrane pass occupies residues 216 to 236; it reads WVYWVGPFLGSLLGAGFYATL. Over 237 to 311 the chain is Extracellular; the sequence is KHYKYWHLNP…TSSRTNFSPV (75 aa). The interval 276–311 is disordered; sequence DEETRNGCASNEEGVRATGDEKSSNATSSRTNFSPV. A compositionally biased stretch (basic and acidic residues) spans 288–298; it reads EGVRATGDEKS. Positions 299 to 311 are enriched in polar residues; it reads SNATSSRTNFSPV. N-linked (GlcNAc...) asparagine glycosylation is present at N300.

It belongs to the MIP/aquaporin (TC 1.A.8) family.

The protein resides in the membrane. The enzyme catalyses H2O(in) = H2O(out). The catalysed reaction is NH4(+)(in) = NH4(+)(out). Its function is as follows. Water channel required to facilitate the transport of water across membranes. Also enables low but statistically significant ammonium permeability. May be involved in fungal nitrogen (ammonium) support of the plant host in symbiosis. The protein is Aquaporin Lacbi1:392091 of Laccaria bicolor (strain S238N-H82 / ATCC MYA-4686) (Bicoloured deceiver).